The sequence spans 211 residues: MRNRILVSACAALAMFAMQAPAHAAATDQLQSFVTGVKSARGEFTQRQVKGQGANVKVTGTSSGTFVFSRPGKFTWRYTKPYEQLLQADGQTLYIYDKDLNQVTERKLDGALGSSPAAILFGSNDLDKNFVVRNGPTRDGVEWLELTPKAKDTQFERIGIGFKAGNLEAMELRDAFGNTTLLTFTGMQKNPPLAADAFRFTVPKGADVMKQ.

Positions 1-24 (MRNRILVSACAALAMFAMQAPAHA) are cleaved as a signal peptide.

This sequence belongs to the LolA family. As to quaternary structure, monomer.

It is found in the periplasm. Functionally, participates in the translocation of lipoproteins from the inner membrane to the outer membrane. Only forms a complex with a lipoprotein if the residue after the N-terminal Cys is not an aspartate (The Asp acts as a targeting signal to indicate that the lipoprotein should stay in the inner membrane). This is Outer-membrane lipoprotein carrier protein from Cupriavidus taiwanensis (strain DSM 17343 / BCRC 17206 / CCUG 44338 / CIP 107171 / LMG 19424 / R1) (Ralstonia taiwanensis (strain LMG 19424)).